We begin with the raw amino-acid sequence, 526 residues long: Lycopene epsilon cyclase, chloroplastic (526 aa).

NAD(+) is bound at residue 108 to 136 (LVVIGCGPAGLALAAESAKLGLNVGLVGP). 2 helical membrane-spanning segments follow: residues 443–463 (FFLF…RSFF) and 477–497 (FLGS…MFII).

The protein belongs to the lycopene cyclase family.

Its subcellular location is the plastid. The protein resides in the chloroplast membrane. The enzyme catalyses a carotenoid psi-end group = a carotenoid epsilon-end group. It functions in the pathway carotenoid biosynthesis; alpha-zeacarotene biosynthesis. The protein operates within carotenoid biosynthesis; delta-carotene biosynthesis. Its function is as follows. Catalyzes the single cyclization reaction which converts lycopene to delta-carotene and neurosporene to alpha-zeacarotene. Required for lutein biosynthesis. The polypeptide is Lycopene epsilon cyclase, chloroplastic (Solanum lycopersicum (Tomato)).